A 265-amino-acid polypeptide reads, in one-letter code: MADS-box protein JOINTLESS (265 aa).

An MADS-box domain is found at 3-57 (REKIQIKKIDNSTARQVTFSKRRRGLFKKAEELSVLCDADVALIIFSSTGKLFDY). The region spanning 87–177 (QLVENSNYSR…RQQVMEISNN (91 aa)) is the K-box domain. A disordered region spans residues 196–232 (ENGFNNNNNEDGQSSESVTNPCNSIDPPPQDDDSSDT). Over residues 205–218 (EDGQSSESVTNPCN) the composition is skewed to polar residues.

As to expression, widely expressed with highest levels in shoot tips and axillary buds. Also found in fully developed pedicels and flowers.

Its subcellular location is the nucleus. In terms of biological role, putative transcription factor that coordinates gene expression underlying the differentiation of the pedicel abscission zone. May also be involved in the maintenance of the inflorescence meristem state. The sequence is that of MADS-box protein JOINTLESS (J) from Solanum lycopersicum (Tomato).